The chain runs to 120 residues: Large ribosomal subunit protein uL18 (120 aa).

The protein belongs to the universal ribosomal protein uL18 family. Part of the 50S ribosomal subunit; part of the 5S rRNA/L5/L18/L25 subcomplex. Contacts the 5S and 23S rRNAs.

This is one of the proteins that bind and probably mediate the attachment of the 5S RNA into the large ribosomal subunit, where it forms part of the central protuberance. The protein is Large ribosomal subunit protein uL18 of Beijerinckia indica subsp. indica (strain ATCC 9039 / DSM 1715 / NCIMB 8712).